The primary structure comprises 442 residues: Amino-acid acetyltransferase (442 aa).

The N-acetyltransferase domain maps to 295-442; sequence EQARAATIED…RSKVLSKTIS (148 aa).

This sequence belongs to the acetyltransferase family. ArgA subfamily.

The protein localises to the cytoplasm. The catalysed reaction is L-glutamate + acetyl-CoA = N-acetyl-L-glutamate + CoA + H(+). It functions in the pathway amino-acid biosynthesis; L-arginine biosynthesis; N(2)-acetyl-L-ornithine from L-glutamate: step 1/4. This is Amino-acid acetyltransferase from Aeromonas salmonicida (strain A449).